The following is a 558-amino-acid chain: Formate--tetrahydrofolate ligase (558 aa).

66-73 (TPAGEGKT) contributes to the ATP binding site.

Belongs to the formate--tetrahydrofolate ligase family.

It carries out the reaction (6S)-5,6,7,8-tetrahydrofolate + formate + ATP = (6R)-10-formyltetrahydrofolate + ADP + phosphate. It participates in one-carbon metabolism; tetrahydrofolate interconversion. In Neisseria gonorrhoeae (strain ATCC 700825 / FA 1090), this protein is Formate--tetrahydrofolate ligase.